Reading from the N-terminus, the 697-residue chain is Beta-galactosidase 17 (697 aa).

Positions 1–35 are cleaved as a signal peptide; sequence MAMTSWPSTGRQRRHQLASMLLLVLVVVGIYVPVF. The active-site Proton donor is the Glu-218. Glu-301 serves as the catalytic Nucleophile. N-linked (GlcNAc...) asparagine glycosylation is found at Asn-333, Asn-519, Asn-573, Asn-583, and Asn-690.

The protein belongs to the glycosyl hydrolase 35 family. As to expression, ubiquitous, with higher expression levels in roots and siliques.

Its subcellular location is the secreted. The protein localises to the extracellular space. It localises to the apoplast. It catalyses the reaction Hydrolysis of terminal non-reducing beta-D-galactose residues in beta-D-galactosides.. In Arabidopsis thaliana (Mouse-ear cress), this protein is Beta-galactosidase 17 (BGAL17).